Reading from the N-terminus, the 141-residue chain is Nucleoside diphosphate kinase (141 aa).

Positions 11, 59, 87, 93, 104, and 114 each coordinate ATP. His-117 functions as the Pros-phosphohistidine intermediate in the catalytic mechanism.

This sequence belongs to the NDK family. Homotetramer. Mg(2+) is required as a cofactor.

It is found in the cytoplasm. It catalyses the reaction a 2'-deoxyribonucleoside 5'-diphosphate + ATP = a 2'-deoxyribonucleoside 5'-triphosphate + ADP. The enzyme catalyses a ribonucleoside 5'-diphosphate + ATP = a ribonucleoside 5'-triphosphate + ADP. Its function is as follows. Major role in the synthesis of nucleoside triphosphates other than ATP. The ATP gamma phosphate is transferred to the NDP beta phosphate via a ping-pong mechanism, using a phosphorylated active-site intermediate. This is Nucleoside diphosphate kinase from Bordetella avium (strain 197N).